The sequence spans 433 residues: uncharacterized protein (433 aa).

A helical transmembrane segment spans residues 36–58; the sequence is YYYYVQLAFKMLVGVLKNLPVVY. The segment at 169-433 is disordered; that stretch reads VRVPSRDLQP…GEGRDLPEDN (265 aa). Acidic residues-rich tracts occupy residues 216 to 227 and 234 to 254; these read GEPGENGDESDE and GDED…YESD. Composition is skewed to basic and acidic residues over residues 265–280, 354–364, and 422–433; these read EPDR…RGSE, GGRRPARRDSP, and RRGEGRDLPEDN.

It is found in the host membrane. This is an uncharacterized protein from Psittacid herpesvirus 1 (isolate Amazon parrot/-/97-0001/1997) (PsHV-1).